The following is a 107-amino-acid chain: Magnetosome protein MmsF (107 aa).

Residues 1 to 13 (MTEAILRSTLGAR) lie on the Cytoplasmic side of the membrane. A helical membrane pass occupies residues 14–34 (TTVMAALSYLSVLCFVPLLVD). Residues 35-46 (RDDEFVYFHAKQ) are Lumenal-facing. The helical transmembrane segment at 47-67 (GLVIWMWGVLALFALHVPVLG) threads the bilayer. At 68–69 (KW) the chain is on the cytoplasmic side. The helical transmembrane segment at 70–90 (IFGFSSMGVLVFSLLGLVSVV) threads the bilayer. The Lumenal portion of the chain corresponds to 91-107 (FQRAWKLPLISWVAHRI).

This sequence belongs to the magnetosome MamF/MmsF protein family. May oligomerize.

Its subcellular location is the magnetosome membrane. Its function may be negatively regulated by one of the MamGFDC proteins. Its function is as follows. Plays a major role in synthesis of cubooctahedral magnetite crystals by controlling crystal growth and morphology after nucleation. Has a partially redundant function with MamF. When overexpressed in E.coli the soluble protein self assembles into shells of about 36 nm. This protein mediates the formation of magnetite nanoparticles from a solution of Fe(2+) and Fe(3+) sulfate; the crystals are larger and lack alternative iron oxide/oxyhydroxide species seen in the protein's absence. The polypeptide is Magnetosome protein MmsF (Paramagnetospirillum magneticum (strain ATCC 700264 / AMB-1) (Magnetospirillum magneticum)).